The sequence spans 127 residues: MNQFRLKEIYIDGVPSESHLIQKEVTYMLSRKEVFEVHLNKKGRISFLYETQDGMEQYKIKLSMPEKKLSFQWFAWDGSSYVRMNTQNWLTKQIFFRFLKSTYFFKGKKQKMFLAEGKMKTKDKNRG.

As to quaternary structure, interacts with both the D1 and D2 domains of dynamin-like protein DynA.

It localises to the cell membrane. The protein is Protein YwpG (ywpG) of Bacillus subtilis (strain 168).